The chain runs to 309 residues: Cilia-and flagella-associated protein 96 (309 aa).

Residues 220–249 are disordered; that stretch reads EEKKKTISNTFKPSSPGKKPGGMKAGTFDP.

This sequence belongs to the CFAP96 family. As to expression, detected in testis and fetal liver.

It localises to the cytoplasm. The protein resides in the cytoskeleton. Its subcellular location is the microtubule organizing center. It is found in the centrosome. The sequence is that of Cilia-and flagella-associated protein 96 from Homo sapiens (Human).